The primary structure comprises 269 residues: Formamidopyrimidine-DNA glycosylase (269 aa).

The active-site Schiff-base intermediate with DNA is the Pro-2. The active-site Proton donor is Glu-3. Catalysis depends on Lys-57, which acts as the Proton donor; for beta-elimination activity. Positions 90, 109, and 150 each coordinate DNA. The FPG-type zinc-finger motif lies at 235 to 269 (NVYGRAGQPCVQCDAILKADRHGQRSTAYCPQCQR). Arg-259 functions as the Proton donor; for delta-elimination activity in the catalytic mechanism.

Belongs to the FPG family. In terms of assembly, monomer. Requires Zn(2+) as cofactor.

The catalysed reaction is Hydrolysis of DNA containing ring-opened 7-methylguanine residues, releasing 2,6-diamino-4-hydroxy-5-(N-methyl)formamidopyrimidine.. It carries out the reaction 2'-deoxyribonucleotide-(2'-deoxyribose 5'-phosphate)-2'-deoxyribonucleotide-DNA = a 3'-end 2'-deoxyribonucleotide-(2,3-dehydro-2,3-deoxyribose 5'-phosphate)-DNA + a 5'-end 5'-phospho-2'-deoxyribonucleoside-DNA + H(+). In terms of biological role, involved in base excision repair of DNA damaged by oxidation or by mutagenic agents. Acts as a DNA glycosylase that recognizes and removes damaged bases. Has a preference for oxidized purines, such as 7,8-dihydro-8-oxoguanine (8-oxoG). Has AP (apurinic/apyrimidinic) lyase activity and introduces nicks in the DNA strand. Cleaves the DNA backbone by beta-delta elimination to generate a single-strand break at the site of the removed base with both 3'- and 5'-phosphates. The chain is Formamidopyrimidine-DNA glycosylase from Alcanivorax borkumensis (strain ATCC 700651 / DSM 11573 / NCIMB 13689 / SK2).